The chain runs to 347 residues: Glucose 1-dehydrogenase (347 aa).

Cys39 contacts Zn(2+). Residue Thr41 participates in substrate binding. Zn(2+)-binding residues include His64 and Glu65. Positions 110 and 146 each coordinate substrate. Glu146 contributes to the Zn(2+) binding site. NADP(+)-binding positions include 178–181 (AGPV), 260–262 (LGV), and 289–291 (SVN). Asn291 provides a ligand contact to substrate.

This sequence belongs to the zinc-containing alcohol dehydrogenase family. Glucose 1-dehydrogenase subfamily. In terms of assembly, homodimer. Zn(2+) serves as cofactor.

The enzyme catalyses D-glucose + NAD(+) = D-glucono-1,5-lactone + NADH + H(+). It carries out the reaction D-glucose + NADP(+) = D-glucono-1,5-lactone + NADPH + H(+). Functionally, catalyzes the NAD(P)(+)-dependent oxidation of D-glucose to D-gluconate via gluconolactone. To a lesser extent, is also active with xylose as substrate, but mannose, arabinose, galactose, fructose 6-phosphate, glucose 6-phosphate, glycerinaldehyde 3-phosphate, ribose, sorbitol, ethanol, erythritol, or lactose are not oxidized by the enzyme. Can utilize both NAD(+) and NADP(+) as electron acceptor, with a marked preference for NADP(+). Is involved in the degradation of glucose through a non-phosphorylative variant of the Entner-Doudoroff pathway. This Thermoproteus tenax (strain ATCC 35583 / DSM 2078 / JCM 9277 / NBRC 100435 / Kra 1) protein is Glucose 1-dehydrogenase (gdh).